A 312-amino-acid chain; its full sequence is Methionyl-tRNA formyltransferase (312 aa).

Residue 109-112 coordinates (6S)-5,6,7,8-tetrahydrofolate; that stretch reads SLLP.

The protein belongs to the Fmt family.

The enzyme catalyses L-methionyl-tRNA(fMet) + (6R)-10-formyltetrahydrofolate = N-formyl-L-methionyl-tRNA(fMet) + (6S)-5,6,7,8-tetrahydrofolate + H(+). Functionally, attaches a formyl group to the free amino group of methionyl-tRNA(fMet). The formyl group appears to play a dual role in the initiator identity of N-formylmethionyl-tRNA by promoting its recognition by IF2 and preventing the misappropriation of this tRNA by the elongation apparatus. In Nitrosospira multiformis (strain ATCC 25196 / NCIMB 11849 / C 71), this protein is Methionyl-tRNA formyltransferase.